The chain runs to 322 residues: Probable uridine nucleosidase 2 (322 aa).

Catalysis depends on residues aspartate 14 and histidine 246.

Belongs to the IUNH family. In terms of assembly, component of the NSH heterocomplex made of URH1/NSH1 and URH2/NSH2 which exhibits strong xanthosine nucleosidase activity. Interacts with URH1. In terms of tissue distribution, expressed in roots, seedlings and flowers.

It is found in the cytoplasm. The protein resides in the cytosol. It catalyses the reaction uridine + H2O = D-ribose + uracil. The catalysed reaction is inosine + H2O = hypoxanthine + D-ribose. It carries out the reaction xanthosine + H2O = D-ribose + xanthine. In terms of biological role, involved in pyrimidine breakdown, especially in response to dark stress. In the presence of URH1, exhibits efficient inosine and xanthosine hydrolytic activities. Support inosine breakdown especially during the late phase of senescence. In Arabidopsis thaliana (Mouse-ear cress), this protein is Probable uridine nucleosidase 2.